A 123-amino-acid chain; its full sequence is Large ribosomal subunit protein uL22c (123 aa).

It belongs to the universal ribosomal protein uL22 family. As to quaternary structure, part of the 50S ribosomal subunit.

The protein resides in the plastid. The protein localises to the chloroplast. Functionally, this protein binds specifically to 23S rRNA. The globular domain of the protein is located near the polypeptide exit tunnel on the outside of the subunit, while an extended beta-hairpin is found that lines the wall of the exit tunnel in the center of the 70S ribosome. The sequence is that of Large ribosomal subunit protein uL22c (rpl22) from Chara vulgaris (Common stonewort).